A 476-amino-acid polypeptide reads, in one-letter code: Adenosylhomocysteinase (476 aa).

3 residues coordinate substrate: T61, D140, and E200. Position 201–203 (201–203 (TTT)) interacts with NAD(+). K230 and D234 together coordinate substrate. NAD(+) is bound by residues N235, 264-269 (GYGDVG), E287, N322, 343-345 (IGH), and N389.

The protein belongs to the adenosylhomocysteinase family. NAD(+) is required as a cofactor.

The protein localises to the cytoplasm. It carries out the reaction S-adenosyl-L-homocysteine + H2O = L-homocysteine + adenosine. The protein operates within amino-acid biosynthesis; L-homocysteine biosynthesis; L-homocysteine from S-adenosyl-L-homocysteine: step 1/1. In terms of biological role, may play a key role in the regulation of the intracellular concentration of adenosylhomocysteine. The protein is Adenosylhomocysteinase of Acidovorax ebreus (strain TPSY) (Diaphorobacter sp. (strain TPSY)).